Consider the following 448-residue polypeptide: Probable glycine dehydrogenase (decarboxylating) subunit 1 (448 aa).

The protein belongs to the GcvP family. N-terminal subunit subfamily. As to quaternary structure, the glycine cleavage system is composed of four proteins: P, T, L and H. In this organism, the P 'protein' is a heterodimer of two subunits.

The enzyme catalyses N(6)-[(R)-lipoyl]-L-lysyl-[glycine-cleavage complex H protein] + glycine + H(+) = N(6)-[(R)-S(8)-aminomethyldihydrolipoyl]-L-lysyl-[glycine-cleavage complex H protein] + CO2. In terms of biological role, the glycine cleavage system catalyzes the degradation of glycine. The P protein binds the alpha-amino group of glycine through its pyridoxal phosphate cofactor; CO(2) is released and the remaining methylamine moiety is then transferred to the lipoamide cofactor of the H protein. The chain is Probable glycine dehydrogenase (decarboxylating) subunit 1 from Shouchella clausii (strain KSM-K16) (Alkalihalobacillus clausii).